The following is a 240-amino-acid chain: tRNA pseudouridine synthase A (240 aa).

Aspartate 52 serves as the catalytic Nucleophile. Position 110 (tyrosine 110) interacts with substrate.

The protein belongs to the tRNA pseudouridine synthase TruA family. As to quaternary structure, homodimer.

The catalysed reaction is uridine(38/39/40) in tRNA = pseudouridine(38/39/40) in tRNA. Functionally, formation of pseudouridine at positions 38, 39 and 40 in the anticodon stem and loop of transfer RNAs. This chain is tRNA pseudouridine synthase A, found in Solibacter usitatus (strain Ellin6076).